Consider the following 192-residue polypeptide: uncharacterized protein (192 aa).

A Nudix hydrolase domain is found at 29-160 (QRQAAVLVPI…PLDIERKQQR (132 aa)). The Nudix box motif lies at 67 to 89 (GAADKTDRSIIETALREAQEEVA). Mg(2+)-binding residues include glutamate 83 and glutamate 87.

It belongs to the Nudix hydrolase family. PCD1 subfamily. Mn(2+) is required as a cofactor. Mg(2+) serves as cofactor.

Probably mediates the hydrolysis of some nucleoside diphosphate derivatives. This is an uncharacterized protein from Pectobacterium atrosepticum (strain SCRI 1043 / ATCC BAA-672) (Erwinia carotovora subsp. atroseptica).